The primary structure comprises 1399 residues: DNA-directed RNA polymerase subunit beta' (1399 aa).

The Zn(2+) site is built by Cys-70, Cys-72, Cys-85, and Cys-88. 3 residues coordinate Mg(2+): Asp-460, Asp-462, and Asp-464. 4 residues coordinate Zn(2+): Cys-814, Cys-888, Cys-895, and Cys-898.

This sequence belongs to the RNA polymerase beta' chain family. In terms of assembly, the RNAP catalytic core consists of 2 alpha, 1 beta, 1 beta' and 1 omega subunit. When a sigma factor is associated with the core the holoenzyme is formed, which can initiate transcription. Requires Mg(2+) as cofactor. It depends on Zn(2+) as a cofactor.

The catalysed reaction is RNA(n) + a ribonucleoside 5'-triphosphate = RNA(n+1) + diphosphate. Its function is as follows. DNA-dependent RNA polymerase catalyzes the transcription of DNA into RNA using the four ribonucleoside triphosphates as substrates. The sequence is that of DNA-directed RNA polymerase subunit beta' from Pseudomonas syringae pv. syringae (strain B728a).